Here is a 698-residue protein sequence, read N- to C-terminus: Adhesion G protein-coupled receptor F4 (698 aa).

The signal sequence occupies residues 1–19; that stretch reads MKPWIAMVCCLVFFLTTEC. Residues 20–409 are Extracellular-facing; it reads SHSKPKTHRK…VKNTILNHIT (390 aa). Residues N61, N168, N213, N268, N290, N344, and N375 are each glycosylated (N-linked (GlcNAc...) asparagine). The GAIN-B domain maps to 250 to 401; it reads RISHSSSEHS…SILMSSKPVK (152 aa). Disulfide bonds link C353-C380 and C368-C382. The tract at residues 353-401 is GPS; it reads CVSWDPATGQWDESPCTVMSDINSTVKCRCRHTKAVTSFSILMSSKPVK. The helical transmembrane segment at 410–430 threads the bilayer; that stretch reads FIGLSISIFSLVLCLVIEAIV. Topologically, residues 431-444 are cytoplasmic; sequence WSRVVVTEISYMRH. A helical transmembrane segment spans residues 445–465; the sequence is VCIVNIAVSLLTANVWFIIGS. N466 carries N-linked (GlcNAc...) asparagine glycosylation. Residues 466–486 are Extracellular-facing; it reads NFSANVQEDHKWCVAVTFLCH. A helical transmembrane segment spans residues 487–507; the sequence is FFFLSLFFWMLFKALLIVYGI. Over 508 to 518 the chain is Cytoplasmic; that stretch reads LVVFRRMMKSR. Residues 519–539 traverse the membrane as a helical segment; sequence MMAIGFAIGYGCPLVIAVITV. Over 540 to 566 the chain is Extracellular; it reads TVTEPGEGYTRKDACWLNWNQTKALFA. A glycan (N-linked (GlcNAc...) asparagine) is linked at N559. Residues 567–587 form a helical membrane-spanning segment; sequence FAIPALAIVAVNLLVVLAVAI. Over 588-611 the chain is Cytoplasmic; sequence NTQRPLIGSSKSQDMAIVFRISKN. Residues 612 to 632 traverse the membrane as a helical segment; that stretch reads VAILTPLLGLTWGFGLTTLLE. The Extracellular segment spans residues 633–635; it reads GVH. The helical transmembrane segment at 636–656 threads the bilayer; it reads LVFHIIFALLNAFQGFFILLF. Residues 657-698 lie on the Cytoplasmic side of the membrane; that stretch reads GTIMDHKIRDALRMRVSSLKGKSRAAEKVSLSPANGSRILNR.

This sequence belongs to the G-protein coupled receptor 2 family. Adhesion G-protein coupled receptor (ADGR) subfamily. Expressed in squamous epithelia.

Its subcellular location is the membrane. In terms of biological role, orphan receptor. In Mus musculus (Mouse), this protein is Adhesion G protein-coupled receptor F4 (Adgrf4).